We begin with the raw amino-acid sequence, 109 residues long: LPSLSADAEAPSPLSLKADAPLAHIDSGLLGVPYAKQPIGELRVTTLRLIELPPEKLVVGAPVYLYQFSYESPSSAIKQEVVGHIEDLTYVFKGSQYQDIESPTAYQSK.

It belongs to the type-B carboxylesterase/lipase family. In terms of tissue distribution, fat body, the site of their biosynthesis, and the hemolymph where it is secreted.

It carries out the reaction juvenile hormone I + H2O = juvenile hormone I carboxylate + methanol + H(+). The enzyme catalyses juvenile hormone III + H2O = juvenile hormone III carboxylate + methanol + H(+). In terms of biological role, JH esterase plays a crucial role in the decrease of JH activity in lepidopteran insects, by hydrolyzing the methyl ester of JH. It is also involved in the transport of JH. In Trichoplusia ni (Cabbage looper), this protein is Juvenile hormone esterase, isoform A.